The chain runs to 137 residues: Large ribosomal subunit protein uL16 (137 aa).

A disordered region spans residues 1–20 (MLQPSNRKYRKDFKGRNRGV). Over residues 7-17 (RKYRKDFKGRN) the composition is skewed to basic residues.

The protein belongs to the universal ribosomal protein uL16 family. As to quaternary structure, part of the 50S ribosomal subunit.

In terms of biological role, binds 23S rRNA and is also seen to make contacts with the A and possibly P site tRNAs. This is Large ribosomal subunit protein uL16 from Coxiella burnetii (strain CbuG_Q212) (Coxiella burnetii (strain Q212)).